Here is a 500-residue protein sequence, read N- to C-terminus: Probable cytosol aminopeptidase (500 aa).

Residues K264 and D269 each contribute to the Mn(2+) site. K276 is a catalytic residue. The Mn(2+) site is built by D287, D346, and E348. Residue R350 is part of the active site.

This sequence belongs to the peptidase M17 family. The cofactor is Mn(2+).

The protein resides in the cytoplasm. It carries out the reaction Release of an N-terminal amino acid, Xaa-|-Yaa-, in which Xaa is preferably Leu, but may be other amino acids including Pro although not Arg or Lys, and Yaa may be Pro. Amino acid amides and methyl esters are also readily hydrolyzed, but rates on arylamides are exceedingly low.. It catalyses the reaction Release of an N-terminal amino acid, preferentially leucine, but not glutamic or aspartic acids.. Presumably involved in the processing and regular turnover of intracellular proteins. Catalyzes the removal of unsubstituted N-terminal amino acids from various peptides. The protein is Probable cytosol aminopeptidase of Chlamydia abortus (strain DSM 27085 / S26/3) (Chlamydophila abortus).